The chain runs to 270 residues: Vegetative storage protein 1 (270 aa).

The N-terminal stretch at 1-17 (MKILSLSLLLLLAATVS) is a signal peptide. N-linked (GlcNAc...) asparagine glycosylation is found at asparagine 115 and asparagine 215.

This sequence belongs to the APS1/VSP family. In terms of tissue distribution, expressed in leaves and in gynoecia, especially in styles, the basal and distal ends of ovaries and in siliques.

May function as somatic storage protein during early seedling development. This chain is Vegetative storage protein 1 (VSP1), found in Arabidopsis thaliana (Mouse-ear cress).